The following is a 130-amino-acid chain: Protein YchQ (130 aa).

The Periplasmic portion of the chain corresponds to 1–9 (MTSFSTLLS). Residues 10 to 28 (VHLISIALSVGLLTLRFWL) traverse the membrane as a helical segment. At 29–39 (RYQKHPQAFAR) the chain is on the cytoplasmic side. A helical membrane pass occupies residues 40 to 59 (WTRIVPPVVDTLLLLSGIAL). Residues 60 to 73 (MAKAHILPFSGQAQ) lie on the Periplasmic side of the membrane. Residues 74 to 93 (WLTEKLFGVIIYIVLGFIAL) form a helical membrane-spanning segment. The Cytoplasmic segment spans residues 94–104 (DYRRMHSQQAR). The chain crosses the membrane as a helical span at residues 105 to 124 (IIAFPLALVVLYIIIKLATT). The Periplasmic segment spans residues 125 to 130 (KVPLLG).

This sequence belongs to the SirB2 family.

It is found in the cell inner membrane. The polypeptide is Protein YchQ (ychQ) (Escherichia coli (strain K12)).